Consider the following 365-residue polypeptide: DNA replication and repair protein RecF (365 aa).

Residue 23 to 30 (GPNGIGKS) coordinates ATP.

This sequence belongs to the RecF family.

It localises to the cytoplasm. In terms of biological role, the RecF protein is involved in DNA metabolism; it is required for DNA replication and normal SOS inducibility. RecF binds preferentially to single-stranded, linear DNA. It also seems to bind ATP. The protein is DNA replication and repair protein RecF of Parasynechococcus marenigrum (strain WH8102).